Here is a 300-residue protein sequence, read N- to C-terminus: Acetylglutamate kinase (300 aa).

Substrate-binding positions include glycine 73–glycine 74, arginine 95, and asparagine 197.

Belongs to the acetylglutamate kinase family. ArgB subfamily.

The protein localises to the cytoplasm. It carries out the reaction N-acetyl-L-glutamate + ATP = N-acetyl-L-glutamyl 5-phosphate + ADP. It participates in amino-acid biosynthesis; L-arginine biosynthesis; N(2)-acetyl-L-ornithine from L-glutamate: step 2/4. In terms of biological role, catalyzes the ATP-dependent phosphorylation of N-acetyl-L-glutamate. The protein is Acetylglutamate kinase of Bordetella parapertussis (strain 12822 / ATCC BAA-587 / NCTC 13253).